The chain runs to 923 residues: Progesterone receptor (923 aa).

Residues Met-1–Thr-11 are compositionally biased toward basic and acidic residues. The interval Met-1–Val-49 is disordered. The interval Met-1–Leu-164 is AF3; mediates transcriptional activation (in isoform B). The interval Met-1–Ile-556 is modulating, Pro-Rich. A Glycyl lysine isopeptide (Lys-Gly) (interchain with G-Cter in SUMO) cross-link involves residue Lys-7. Ser-20 is subject to Phosphoserine. A compositionally biased stretch (polar residues) spans Gln-38–Val-49. Positions Leu-56–Leu-60 match the LXXL motif 1 motif. The segment at Ala-67 to Leu-111 is disordered. Residue Ser-82 is modified to Phosphoserine. The short motif at Leu-115–Leu-119 is the LXXL motif 2 element. Ser-130 and Ser-162 each carry phosphoserine. Residues Arg-152–Ser-239 are disordered. The segment at Met-165–His-304 is mediates transcriptional transrepression (in isoform A). The short motif at Val-184 to Ala-188 is the Nuclear localization signal element. A phosphoserine mark is found at Ser-190 and Ser-213. Residue Ser-293 is modified to Phosphoserine; by MAPK1. A disordered region spans residues Ala-333–Asp-371. Over residues Phe-338 to Pro-353 the composition is skewed to pro residues. Phosphoserine; by MAPK is present on Ser-344. Lys-387 participates in a covalent cross-link: Glycyl lysine isopeptide (Lys-Gly) (interchain with G-Cter in SUMO); alternate. Residue Lys-387 forms a Glycyl lysine isopeptide (Lys-Gly) (interchain with G-Cter in ubiquitin); alternate linkage. A Phosphoserine; by CDK2 modification is found at Ser-399. The tract at residues Thr-412–Val-435 is disordered. Residues Phe-416–Arg-429 are compositionally biased toward pro residues. The segment at Ser-450–Arg-536 is AF1; mediates transcriptional activation. A Glycyl lysine isopeptide (Lys-Gly) (interchain with G-Cter in SUMO) cross-link involves residue Lys-521. 2 consecutive NR C4-type zinc fingers follow at residues Cys-557–Cys-577 and Cys-593–Cys-617. Positions Cys-557 to Phe-629 form a DNA-binding region, nuclear receptor. Phosphoserine is present on Ser-666. The region spanning Gln-669–Ile-903 is the NR LBD domain. The segment at Leu-677–Lys-923 is AF2; mediates transcriptional activation. Arg-756 provides a ligand contact to progesterone.

Belongs to the nuclear hormone receptor family. NR3 subfamily. As to quaternary structure, interacts with SMARD1 and UNC45A. Interacts with CUEDC2; the interaction promotes ubiquitination, decreases sumoylation, and represses transcriptional activity. Interacts with PIAS3; the interaction promotes sumoylation of PR in a hormone-dependent manner, inhibits DNA-binding, and alters nuclear export. Interacts with SP1; the interaction requires ligand-induced phosphorylation on Ser-344. Interacts with PRMT2. Isoform A interacts with NCOR2. Isoform B (but not isoform A) interacts with NCOA2 and NCOA1. Isoform B (but not isoform A) interacts with KLF9. Interacts with GTF2B. In terms of processing, phosphorylated on multiple serine sites. Several of these sites are hormone-dependent. Phosphorylation on Ser-293 is highly hormone-dependent and modulates ubiquitination and sumoylation on Lys-387. Phosphorylation on Ser-344 also requires induction by hormone. Basal phosphorylation on Ser-82, Ser-190 and Ser-399 is increased in response to progesterone and can be phosphorylated in vitro by the CDK2-A1 complex. Increased levels of phosphorylation on Ser-399 also in the presence of EGF, heregulin, IGF, PMA and FBS. Phosphorylation at this site by CDK2 is ligand-independent, and increases nuclear translocation and transcriptional activity. Phosphorylation at Ser-293, but not at Ser-190, is impaired during the G(2)/M phase of the cell cycle. Phosphorylation on Ser-344 by ERK1/2 MAPK is required for interaction with SP1. Post-translationally, sumoylation is hormone-dependent and represses transcriptional activity. Sumoylation on all three sites is enhanced by PIAS3. Desumoylated by SENP1. Sumoylation on Lys-387, the main site of sumoylation, is repressed by ubiquitination on the same site, and modulated by phosphorylation at Ser-293. Ubiquitination is hormone-dependent and represses sumoylation on the same site. Promoted by MAPK-mediated phosphorylation on Ser-293. Ubiquitinated by UBR5, leading to its degradation: UBR5 specifically recognizes and binds ligand-bound PGR when it is not associated with coactivators (NCOAs). In presence of NCOAs, the UBR5-degron is not accessible, preventing its ubiquitination and degradation. In terms of processing, palmitoylated by ZDHHC7 and ZDHHC21. Palmitoylation is required for plasma membrane targeting and for rapid intracellular signaling via ERK and AKT kinases and cAMP generation. As to expression, isoform A and isoform B are expressed in the pituitary.

It is found in the nucleus. Its subcellular location is the cytoplasm. Functionally, the steroid hormones and their receptors are involved in the regulation of eukaryotic gene expression and affect cellular proliferation and differentiation in target tissues. Depending on the isoform, progesterone receptor functions as a transcriptional activator or repressor. Its function is as follows. Ligand-dependent transdominant repressor of steroid hormone receptor transcriptional activity including repression of its isoform B, MR and ER. Transrepressional activity may involve recruitment of corepressor NCOR2. Transcriptional activator of several progesteron-dependent promoters in a variety of cell types. Involved in activation of SRC-dependent MAPK signaling on hormone stimulation. This chain is Progesterone receptor (Pgr), found in Rattus norvegicus (Rat).